We begin with the raw amino-acid sequence, 372 residues long: 4-hydroxy-3-methylbut-2-en-1-yl diphosphate synthase (flavodoxin) (372 aa).

4 residues coordinate [4Fe-4S] cluster: Cys-270, Cys-273, Cys-305, and Glu-312.

This sequence belongs to the IspG family. [4Fe-4S] cluster is required as a cofactor.

The enzyme catalyses (2E)-4-hydroxy-3-methylbut-2-enyl diphosphate + oxidized [flavodoxin] + H2O + 2 H(+) = 2-C-methyl-D-erythritol 2,4-cyclic diphosphate + reduced [flavodoxin]. It participates in isoprenoid biosynthesis; isopentenyl diphosphate biosynthesis via DXP pathway; isopentenyl diphosphate from 1-deoxy-D-xylulose 5-phosphate: step 5/6. Its function is as follows. Converts 2C-methyl-D-erythritol 2,4-cyclodiphosphate (ME-2,4cPP) into 1-hydroxy-2-methyl-2-(E)-butenyl 4-diphosphate. The polypeptide is 4-hydroxy-3-methylbut-2-en-1-yl diphosphate synthase (flavodoxin) (Shewanella amazonensis (strain ATCC BAA-1098 / SB2B)).